A 938-amino-acid chain; its full sequence is Bifunctional glutamine synthetase adenylyltransferase/adenylyl-removing enzyme (938 aa).

The segment at 1-457 (MLEADAARLK…HFDHVFGDPS (457 aa)) is adenylyl removase. Residues 460-938 (AHTLDSMWAA…ALWTIVFGSA (479 aa)) form an adenylyl transferase region.

The protein belongs to the GlnE family. Mg(2+) is required as a cofactor.

The catalysed reaction is [glutamine synthetase]-O(4)-(5'-adenylyl)-L-tyrosine + phosphate = [glutamine synthetase]-L-tyrosine + ADP. It carries out the reaction [glutamine synthetase]-L-tyrosine + ATP = [glutamine synthetase]-O(4)-(5'-adenylyl)-L-tyrosine + diphosphate. Its function is as follows. Involved in the regulation of glutamine synthetase GlnA, a key enzyme in the process to assimilate ammonia. When cellular nitrogen levels are high, the C-terminal adenylyl transferase (AT) inactivates GlnA by covalent transfer of an adenylyl group from ATP to specific tyrosine residue of GlnA, thus reducing its activity. Conversely, when nitrogen levels are low, the N-terminal adenylyl removase (AR) activates GlnA by removing the adenylyl group by phosphorolysis, increasing its activity. The regulatory region of GlnE binds the signal transduction protein PII (GlnB) which indicates the nitrogen status of the cell. The chain is Bifunctional glutamine synthetase adenylyltransferase/adenylyl-removing enzyme from Aromatoleum aromaticum (strain DSM 19018 / LMG 30748 / EbN1) (Azoarcus sp. (strain EbN1)).